A 157-amino-acid chain; its full sequence is Ribosomal RNA large subunit methyltransferase H (157 aa).

S-adenosyl-L-methionine-binding positions include L73, G104, and 123–128 (LGPLTL).

It belongs to the RNA methyltransferase RlmH family. In terms of assembly, homodimer.

Its subcellular location is the cytoplasm. The catalysed reaction is pseudouridine(1915) in 23S rRNA + S-adenosyl-L-methionine = N(3)-methylpseudouridine(1915) in 23S rRNA + S-adenosyl-L-homocysteine + H(+). In terms of biological role, specifically methylates the pseudouridine at position 1915 (m3Psi1915) in 23S rRNA. The protein is Ribosomal RNA large subunit methyltransferase H of Xylella fastidiosa (strain M12).